Consider the following 129-residue polypeptide: Large ribosomal subunit protein uL22 (129 aa).

Belongs to the universal ribosomal protein uL22 family. Part of the 50S ribosomal subunit.

This protein binds specifically to 23S rRNA; its binding is stimulated by other ribosomal proteins, e.g. L4, L17, and L20. It is important during the early stages of 50S assembly. It makes multiple contacts with different domains of the 23S rRNA in the assembled 50S subunit and ribosome. Functionally, the globular domain of the protein is located near the polypeptide exit tunnel on the outside of the subunit, while an extended beta-hairpin is found that lines the wall of the exit tunnel in the center of the 70S ribosome. This Bartonella quintana (strain Toulouse) (Rochalimaea quintana) protein is Large ribosomal subunit protein uL22.